The chain runs to 1558 residues: Arginine-glutamic acid dipeptide repeats protein (1558 aa).

Positions M1–R36 are enriched in basic and acidic residues. The interval M1 to D90 is disordered. Phosphoserine is present on residues S53 and S56. Residues K74–R85 are compositionally biased toward basic residues. The BAH domain occupies V103–Q283. Position 120 is a phosphothreonine (T120). Residues S142 and S304 each carry the phosphoserine modification. Positions G284–P387 constitute an ELM2 domain. One can recognise an SANT domain in the interval L391 to E443. The segment at T464–S495 is disordered. Polar residues predominate over residues R465–P474. The span at S479 to A488 shows a compositional bias: low complexity. The segment at C507–C532 adopts a GATA-type zinc-finger fold. The interval L542–F1125 is disordered. K560 is covalently cross-linked (Glycyl lysine isopeptide (Lys-Gly) (interchain with G-Cter in SUMO2)). T593 is subject to Phosphothreonine. Phosphoserine occurs at positions 594, 600, and 613. Low complexity predominate over residues S609–D623. Over residues S624–A640 the composition is skewed to basic and acidic residues. K637 is covalently cross-linked (Glycyl lysine isopeptide (Lys-Gly) (interchain with G-Cter in SUMO2)). Phosphoserine is present on residues S642, S656, S675, and S679. Over residues E652–E673 the composition is skewed to basic and acidic residues. Residues S688–N708 are compositionally biased toward basic and acidic residues. Polar residues predominate over residues R709–D720. Low complexity predominate over residues D726–S752. The segment covering S778 to V792 has biased composition (polar residues). The segment covering L806–A823 has biased composition (pro residues). 3 stretches are compositionally biased toward low complexity: residues P824 to H857, G865 to Q874, and Q891 to P901. Over residues Q902 to P932 the composition is skewed to pro residues. Over residues K962–P972 the composition is skewed to low complexity. Residues H1012–Q1023 are compositionally biased toward polar residues. The segment covering P1027 to G1053 has biased composition (pro residues). Low complexity predominate over residues P1054–S1077. A phosphoserine mark is found at S1098, S1105, and S1107. The span at S1098–E1109 shows a compositional bias: pro residues. T1111 is subject to Phosphothreonine. Residues G1148–S1203 adopt a coiled-coil conformation. K1150 bears the N6-acetyllysine mark. Residues K1154–A1198 show a composition bias toward basic and acidic residues. Positions K1154–I1238 are disordered. At Y1251 the chain carries Phosphotyrosine. At S1258 the chain carries Phosphoserine.

In terms of assembly, interacts with HDAC1 and ATN1. Interaction with ATN1 is improved when the poly-Gln region of ATN1 is extended. Interacts with FAT1.

It localises to the nucleus. It is found in the PML body. Plays a role as a transcriptional repressor during development. May play a role in the control of cell survival. This chain is Arginine-glutamic acid dipeptide repeats protein (Rere), found in Mus musculus (Mouse).